The chain runs to 90 residues: Bombyxin B-7 (90 aa).

An N-terminal signal peptide occupies residues 1–20 (MMKTSVMLMLVVVISLMCSG). 3 disulfides stabilise this stretch: C30–C76, C42–C89, and C75–C80. The propeptide at 49-67 (GGAQYAPYFWTRQYLGSRG) is c peptide like.

The protein belongs to the insulin family. As to quaternary structure, heterodimer of a B chain and an A chain linked by two disulfide bonds.

The protein localises to the secreted. In terms of biological role, brain peptide responsible for activation of prothoracic glands to produce ecdysone in insects. The chain is Bombyxin B-7 (BBXB7) from Bombyx mori (Silk moth).